The primary structure comprises 376 residues: MLNFELITTDGNARRGRVTLNHGVVETPIFMPVGTYGSVKAMSPLELNEIGAQIILGNTFHLWLRPGLDVVNAHEGLHRFIGWDKPILTDSGGFQVFSLGDLRKITEDGVTFASPVNGDKLFLSPEISMQIQRTLNSDIVMQFDECTPYEIDGRPATHEEAAKSMRMSLRWARRSRDEFERLANPNALFGIVQGGMYEDLRDESLAGLSELDFHGFAIGGLSVGEPKEDMMRVLEHVAPRLPANKPHYLMGVGTPEDLVAGVAAGVDMFDCVMPTRNARNGWLFTRYGDVKIKNAAHRNDPRPLDESCACYTCRNFSRAYLHHLHRVGEILGARLNTIHNLHYYLQLMREVREAIEQHRFADFRRQFAADRARGTQ.

Aspartate 90 functions as the Proton acceptor in the catalytic mechanism. Residues 90 to 94, aspartate 144, glutamine 193, and glycine 220 each bind substrate; that span reads DSGGF. The interval 251–257 is RNA binding; that stretch reads GVGTPED. Residue aspartate 270 is the Nucleophile of the active site. The RNA binding; important for wobble base 34 recognition stretch occupies residues 275 to 279; it reads TRNAR. Zn(2+) is bound by residues cysteine 308, cysteine 310, cysteine 313, and histidine 339.

It belongs to the queuine tRNA-ribosyltransferase family. As to quaternary structure, homodimer. Within each dimer, one monomer is responsible for RNA recognition and catalysis, while the other monomer binds to the replacement base PreQ1. It depends on Zn(2+) as a cofactor.

The catalysed reaction is 7-aminomethyl-7-carbaguanine + guanosine(34) in tRNA = 7-aminomethyl-7-carbaguanosine(34) in tRNA + guanine. It participates in tRNA modification; tRNA-queuosine biosynthesis. In terms of biological role, catalyzes the base-exchange of a guanine (G) residue with the queuine precursor 7-aminomethyl-7-deazaguanine (PreQ1) at position 34 (anticodon wobble position) in tRNAs with GU(N) anticodons (tRNA-Asp, -Asn, -His and -Tyr). Catalysis occurs through a double-displacement mechanism. The nucleophile active site attacks the C1' of nucleotide 34 to detach the guanine base from the RNA, forming a covalent enzyme-RNA intermediate. The proton acceptor active site deprotonates the incoming PreQ1, allowing a nucleophilic attack on the C1' of the ribose to form the product. After dissociation, two additional enzymatic reactions on the tRNA convert PreQ1 to queuine (Q), resulting in the hypermodified nucleoside queuosine (7-(((4,5-cis-dihydroxy-2-cyclopenten-1-yl)amino)methyl)-7-deazaguanosine). The protein is Queuine tRNA-ribosyltransferase of Cupriavidus taiwanensis (strain DSM 17343 / BCRC 17206 / CCUG 44338 / CIP 107171 / LMG 19424 / R1) (Ralstonia taiwanensis (strain LMG 19424)).